Reading from the N-terminus, the 394-residue chain is Probable peptidoglycan glycosyltransferase FtsW (394 aa).

Residues 1–27 lie on the Cytoplasmic side of the membrane; sequence MEFLQNIKKNYDEWTRITPQGLLYDRA. Residues 28-48 traverse the membrane as a helical segment; sequence LFWLFVILLLIGLVAVTSASI. Topologically, residues 49-66 are periplasmic; the sequence is PYSSRLFNDPFYFAKRDA. Residues 67–87 traverse the membrane as a helical segment; the sequence is IYVLLSLLTCYISLQISSSQW. The Cytoplasmic portion of the chain corresponds to 88–93; that stretch reads EKWHAK. A helical membrane pass occupies residues 94–114; sequence IFLFSVILLLLVPFIGTSVNG. At 115–120 the chain is on the periplasmic side; that stretch reads AKRWIS. Residues 121 to 141 traverse the membrane as a helical segment; the sequence is LGILNFQPAEFAKLALTCFLA. Topologically, residues 142 to 155 are cytoplasmic; that stretch reads SYFTRRYDEVRSRH. 2 helical membrane-spanning segments follow: residues 156–176 and 177–197; these read VSIFKPFIVMLVLGCFLLLQP and DLGSTVVLFIIMSGMLFIVGA. A topological domain (cytoplasmic) is located at residue Lys-198. A helical membrane pass occupies residues 199 to 219; sequence ILQFVGLIALGGILFVWLVLT. At 220 to 277 the chain is on the periplasmic side; the sequence is ASYRLKRFIGFLEPFKEPYGTGFQLTNSLIAFGRGEITGEGLGNSIQKLDYLPEAHTD. A helical membrane pass occupies residues 278-298; sequence FIMAIIGEEFGFIGILIVILL. Topologically, residues 299–322 are cytoplasmic; it reads LGLLIFRAMKIGRESLMLEQRFRG. The helical transmembrane segment at 323–343 threads the bilayer; that stretch reads FFALGIGFWIFFQGFVNLGMA. Residues 344-353 are Periplasmic-facing; the sequence is LGMLPTKGLT. A helical transmembrane segment spans residues 354-374; the sequence is FPLVSYGGSSIIIMSATIGIL. Residues 375-394 lie on the Cytoplasmic side of the membrane; that stretch reads LRIDHENRLFRIGQARLRDD.

Belongs to the SEDS family. FtsW subfamily.

Its subcellular location is the cell inner membrane. The catalysed reaction is [GlcNAc-(1-&gt;4)-Mur2Ac(oyl-L-Ala-gamma-D-Glu-L-Lys-D-Ala-D-Ala)](n)-di-trans,octa-cis-undecaprenyl diphosphate + beta-D-GlcNAc-(1-&gt;4)-Mur2Ac(oyl-L-Ala-gamma-D-Glu-L-Lys-D-Ala-D-Ala)-di-trans,octa-cis-undecaprenyl diphosphate = [GlcNAc-(1-&gt;4)-Mur2Ac(oyl-L-Ala-gamma-D-Glu-L-Lys-D-Ala-D-Ala)](n+1)-di-trans,octa-cis-undecaprenyl diphosphate + di-trans,octa-cis-undecaprenyl diphosphate + H(+). It functions in the pathway cell wall biogenesis; peptidoglycan biosynthesis. Its function is as follows. Peptidoglycan polymerase that is essential for cell division. The sequence is that of Probable peptidoglycan glycosyltransferase FtsW from Haemophilus influenzae (strain ATCC 51907 / DSM 11121 / KW20 / Rd).